The following is a 101-amino-acid chain: Parathymosin (101 aa).

Positions 1 to 101 (MSEKSVEAAA…RQKTENGASA (101 aa)) are disordered. Ser-2 is modified (N-acetylserine). Phosphoserine is present on Ser-2. Lys-4 carries the N6-acetyllysine modification. 2 positions are modified to phosphoserine: Ser-5 and Ser-13. The span at 13-37 (SAKDLKEKKDKVEEKAGRKERKKEV) shows a compositional bias: basic and acidic residues. Lys-15 is modified (N6-acetyllysine). Residues 38 to 74 (VEEEENGAEEEEEETAEDGEDDDEGDEEDEEEEEEDE) are compositionally biased toward acidic residues. The residue at position 52 (Thr-52) is a Phosphothreonine. Lys-91 is subject to N6-acetyllysine.

Belongs to the pro/parathymosin family.

Functionally, parathymosin may mediate immune function by blocking the effect of prothymosin alpha which confers resistance to certain opportunistic infections. In Mus musculus (Mouse), this protein is Parathymosin (Ptms).